A 694-amino-acid polypeptide reads, in one-letter code: Transcriptional activator HAA1 (694 aa).

Residues 1 to 40 (MVLINGIKYACERCIRGHRVTTCNHTDQPLMMIKPKGRPS) constitute a DNA-binding region (copper-fist). Cys-11, Cys-14, Cys-23, and His-25 together coordinate Zn(2+). Disordered stretches follow at residues 104-128 (QKRH…SQPM) and 209-240 (FNFL…DSSV). Polar residues predominate over residues 111–126 (SPSSSQKKGRSISRSQ). A phosphoserine mark is found at Ser-125, Ser-231, Ser-241, and Ser-291. 4 disordered regions span residues 332 to 388 (FDIN…NGLF), 479 to 514 (EKER…HRYP), 566 to 588 (SSIH…SRQD), and 650 to 677 (MIST…PPSQ). Residues 336–349 (DNCNRINSKSYSKT) show a composition bias toward polar residues. Low complexity predominate over residues 350-378 (NSMNGNGMNNSNNNNINSNGNDKNNNNSS). Composition is skewed to polar residues over residues 566–577 (SSIHSVPQSINS) and 664–677 (SPMS…PPSQ).

Its subcellular location is the nucleus. Regulates the transcription of a set of genes, many of which encode membrane proteins. Among the genes regulated are YGR138C and YRO2. Does not seem to be dependent on copper. In Saccharomyces cerevisiae (strain ATCC 204508 / S288c) (Baker's yeast), this protein is Transcriptional activator HAA1 (HAA1).